We begin with the raw amino-acid sequence, 205 residues long: MGTPKQPSLAPAHALGLRKSDPGIRSLGSDAGGRRWRPAAQSMFQIPEFEPSEQEDASTTDRGLGPSLTEDQPGPYLAPGLLGSIVQQQPGQAANNSHHGGAGTMETRSRHSSYPAGTEEDEGMEEELSPFRGRSRSAPPNLWAAQRYGRELRRMSDEFEGSFKGLPRPKSAGTATQMRQSASWTRIIQSWWDRNLGKGGSTPSQ.

A disordered region spans residues 1 to 139; it reads MGTPKQPSLA…PFRGRSRSAP (139 aa). Phosphoserine is present on Ser67. Residues 85-98 show a composition bias toward polar residues; sequence IVQQQPGQAANNSH. Ser113 bears the Phosphoserine mark. Positions 118-128 are enriched in acidic residues; sequence TEEDEGMEEEL. The residue at position 129 (Ser129) is a Phosphoserine. An asymmetric dimethylarginine; by PRMT1 mark is found at Arg132 and Arg134. Residue Ser135 is modified to Phosphoserine. At Ser137 the chain carries Phosphoserine; by PKA, PKB, PAK1, RPS6KA1, RPS6KB1 and PKC/PRKCQ. The BH3 signature appears at 148–162; the sequence is YGRELRRMSDEFEGS. Phosphoserine occurs at positions 156 and 171. The interval 161 to 180 is disordered; it reads GSFKGLPRPKSAGTATQMRQ.

The protein belongs to the Bcl-2 family. In terms of assembly, forms heterodimers with the anti-apoptotic proteins, Bcl-X(L), Bcl-2 and Bcl-W. Also binds protein S100A10. The Ser-113/Ser-137 phosphorylated form binds 14-3-3 proteins. Interacts with AKT1 and PIM3. Interacts with HIF3A (via C-terminus domain); the interaction reduces the binding between BAD and BAX. Interacts (via BH3 domain) with NOL3 (via CARD domain); preventing the association of BAD with BCL2. Interacts with GIMAP3/IAN4 and GIMAP5/IAN5. In terms of processing, phosphorylated at one or more of Ser-113, Ser-137, Ser-156 and Ser-171 in response to survival stimuli, which blocks its pro-apoptotic activity. Phosphorylation on Ser-137 or Ser-113 promotes heterodimerization with 14-3-3 proteins. This interaction then facilitates the phosphorylation at Ser-156, a site within the BH3 motif, leading to the release of Bcl-X(L) and the promotion of cell survival. Ser-137 is the major site of AKT/PKB phosphorylation, Ser-156 the major site of protein kinase A (CAPK) phosphorylation. Post-translationally, methylation at Arg-132 and Arg-134 by PRMT1 inhibits Akt-mediated phosphorylation at Ser-137. Expressed in all tissues tested, including brain, liver, spleen and heart. In the brain, restricted to epithelial cells of the choroid plexus. Isoform alpha is the more abundant form.

It localises to the mitochondrion outer membrane. It is found in the cytoplasm. In terms of biological role, promotes cell death. Successfully competes for the binding to Bcl-X(L), Bcl-2 and Bcl-W, thereby affecting the level of heterodimerization of these proteins with BAX. Can reverse the death repressor activity of Bcl-X(L), but not that of Bcl-2. Appears to act as a link between growth factor receptor signaling and the apoptotic pathways. The protein is Bcl2-associated agonist of cell death (Bad) of Rattus norvegicus (Rat).